The following is a 261-amino-acid chain: Pyrroline-5-carboxylate reductase (261 aa).

It belongs to the pyrroline-5-carboxylate reductase family.

The protein resides in the cytoplasm. It carries out the reaction L-proline + NADP(+) = (S)-1-pyrroline-5-carboxylate + NADPH + 2 H(+). The enzyme catalyses L-proline + NAD(+) = (S)-1-pyrroline-5-carboxylate + NADH + 2 H(+). Its pathway is amino-acid biosynthesis; L-proline biosynthesis; L-proline from L-glutamate 5-semialdehyde: step 1/1. Functionally, catalyzes the reduction of 1-pyrroline-5-carboxylate (PCA) to L-proline. In Thermus thermophilus (strain ATCC BAA-163 / DSM 7039 / HB27), this protein is Pyrroline-5-carboxylate reductase.